Reading from the N-terminus, the 317-residue chain is Probable methyltransferase tdiE (317 aa).

It belongs to the methyltransferase superfamily. LaeA methyltransferase family.

Its pathway is secondary metabolite biosynthesis. Probable methyltransferase; part of the gene cluster that mediates the biosynthesis of terrequinone A, an antitumor agent. The first step in the biosynthetic pathway for terrequinone A is formation of indole pyruvic acid (IPA) from L-tryptophan by the aminotransferase tdiD. The nonribosomal peptide synthase tdiA then immediately converts unstable IPA to didemethylasterriquinone D (DDAQ D), via condensation of 2 IPA molecules. The symmetric connectivity of the 2 IPA molecules is thought to arise by head-to-tail dual Claisen condensations facilitated by the TE domain. TdiB then catalyzes reverse prenylation by transferring dimethylallyl diphosphate to carbon atom 2' of DDAQ D, to yield asterriquinone C-1. Finally, tdiC and tdiE enzymes robustly convert asterriquinone C-1 to terrequinone A via a transformation involving regular prenylation at carbon atom 5, which requires elimination of the hydroxy group on C-5. The sequence is that of Probable methyltransferase tdiE from Emericella nidulans (strain FGSC A4 / ATCC 38163 / CBS 112.46 / NRRL 194 / M139) (Aspergillus nidulans).